Reading from the N-terminus, the 311-residue chain is Protein N-terminal asparagine amidohydrolase (311 aa).

In terms of assembly, monomer.

It is found in the cytoplasm. It carries out the reaction N-terminal L-asparaginyl-[protein] + H2O + H(+) = N-terminal L-aspartyl-[protein] + NH4(+). In terms of biological role, N-terminal asparagine deamidase that mediates deamidation of N-terminal asparagine residues to aspartate. Required for the ubiquitin-dependent turnover of intracellular proteins that initiate with Met-Asn. These proteins are acetylated on the retained initiator methionine and can subsequently be modified by the removal of N-acetyl methionine by acylaminoacid hydrolase (AAH). Conversion of the resulting N-terminal asparagine to aspartate by NTAN1/PNAD renders the protein susceptible to arginylation, polyubiquitination and degradation as specified by the N-end rule. This enzyme does not act on substrates with internal or C-terminal asparagines and does not act on glutamine residues in any position. This Sus scrofa (Pig) protein is Protein N-terminal asparagine amidohydrolase (NTAN1).